We begin with the raw amino-acid sequence, 763 residues long: Phosphoglycerol transferase I (763 aa).

The next 4 membrane-spanning stretches (helical) occupy residues 1-21 (MSEL…AWKA), 26-46 (WWFA…ITLY), 77-97 (ILPG…LGWV), and 108-128 (VGYS…SPAF).

The protein belongs to the OpgB family.

Its subcellular location is the cell inner membrane. It catalyses the reaction a phosphatidylglycerol + a membrane-derived-oligosaccharide D-glucose = a 1,2-diacyl-sn-glycerol + a membrane-derived-oligosaccharide 6-(glycerophospho)-D-glucose.. The protein operates within glycan metabolism; osmoregulated periplasmic glucan (OPG) biosynthesis. In terms of biological role, transfers a phosphoglycerol residue from phosphatidylglycerol to the membrane-bound nascent glucan backbones. This chain is Phosphoglycerol transferase I, found in Salmonella choleraesuis (strain SC-B67).